Here is a 351-residue protein sequence, read N- to C-terminus: Phospho-N-acetylmuramoyl-pentapeptide-transferase (351 aa).

Transmembrane regions (helical) follow at residues 17–37, 62–82, 85–105, 130–150, 163–183, 190–210, 230–250, 254–274, 281–301, and 328–348; these read MAYA…HIIL, GIPT…LVFW, ILNV…FLGF, IIFS…HVSI, LGVF…NSFN, GLAI…AYIT, LVIF…FNAY, IMMG…TALI, FSIL…QVIV, and QVVI…LSTI.

It belongs to the glycosyltransferase 4 family. MraY subfamily. Mg(2+) is required as a cofactor.

The protein resides in the cell inner membrane. The catalysed reaction is UDP-N-acetyl-alpha-D-muramoyl-L-alanyl-gamma-D-glutamyl-meso-2,6-diaminopimeloyl-D-alanyl-D-alanine + di-trans,octa-cis-undecaprenyl phosphate = di-trans,octa-cis-undecaprenyl diphospho-N-acetyl-alpha-D-muramoyl-L-alanyl-D-glutamyl-meso-2,6-diaminopimeloyl-D-alanyl-D-alanine + UMP. Its pathway is cell wall biogenesis; peptidoglycan biosynthesis. Functionally, catalyzes the initial step of the lipid cycle reactions in the biosynthesis of the cell wall peptidoglycan: transfers peptidoglycan precursor phospho-MurNAc-pentapeptide from UDP-MurNAc-pentapeptide onto the lipid carrier undecaprenyl phosphate, yielding undecaprenyl-pyrophosphoryl-MurNAc-pentapeptide, known as lipid I. The protein is Phospho-N-acetylmuramoyl-pentapeptide-transferase of Borreliella afzelii (strain PKo) (Borrelia afzelii).